We begin with the raw amino-acid sequence, 308 residues long: Bacitracin transport ATP-binding protein BcrA (308 aa).

The 229-residue stretch at 8 to 236 (IETENLTKQY…NRKYTEFDVS (229 aa)) folds into the ABC transporter domain. Residue 40–47 (GRNGAGKT) coordinates ATP.

This sequence belongs to the ABC transporter superfamily. In terms of assembly, the complex is probably composed of two ATP-binding proteins (BcrA) and two transmembrane proteins (BcrB).

Functionally, essential for high-level bacitracin resistance. Part of the ABC transporter complex BcrAB. Probably responsible for energy coupling to the transport system. This is Bacitracin transport ATP-binding protein BcrA from Enterococcus faecalis (Streptococcus faecalis).